The primary structure comprises 376 residues: Ribonucleoside-diphosphate reductase 1 subunit beta (376 aa).

3 residues coordinate Fe cation: D85, E116, and H119. Residue Y123 is part of the active site. Residues E205, E239, and H242 each contribute to the Fe cation site.

This sequence belongs to the ribonucleoside diphosphate reductase small chain family. In terms of assembly, tetramer of two alpha (R1) and two beta (R2) subunits. The B1 protein is a dimer of alpha subunits. A radical transfer pathway occurs between Tyr-123 of R2 and R1. It depends on Fe cation as a cofactor.

It catalyses the reaction a 2'-deoxyribonucleoside 5'-diphosphate + [thioredoxin]-disulfide + H2O = a ribonucleoside 5'-diphosphate + [thioredoxin]-dithiol. In terms of biological role, provides the precursors necessary for DNA synthesis. Catalyzes the biosynthesis of deoxyribonucleotides from the corresponding ribonucleotides. R2 contains the tyrosyl radical required for catalysis. This Salmonella typhimurium (strain LT2 / SGSC1412 / ATCC 700720) protein is Ribonucleoside-diphosphate reductase 1 subunit beta (nrdB).